We begin with the raw amino-acid sequence, 259 residues long: Hydroxyethylthiazole kinase (259 aa).

M50 provides a ligand contact to substrate. The ATP site is built by R122 and T168. G195 is a substrate binding site.

It belongs to the Thz kinase family. The cofactor is Mg(2+).

It carries out the reaction 5-(2-hydroxyethyl)-4-methylthiazole + ATP = 4-methyl-5-(2-phosphooxyethyl)-thiazole + ADP + H(+). Its pathway is cofactor biosynthesis; thiamine diphosphate biosynthesis; 4-methyl-5-(2-phosphoethyl)-thiazole from 5-(2-hydroxyethyl)-4-methylthiazole: step 1/1. Its function is as follows. Catalyzes the phosphorylation of the hydroxyl group of 4-methyl-5-beta-hydroxyethylthiazole (THZ). The chain is Hydroxyethylthiazole kinase from Escherichia coli O127:H6 (strain E2348/69 / EPEC).